The following is a 318-amino-acid chain: L-lactate dehydrogenase (318 aa).

NAD(+) is bound by residues Val18, Asp39, Lys44, Tyr69, and 83–84 (GA). Gln86 and Arg92 together coordinate substrate. Residues Ser105, 122-124 (VSN), and Ser147 each bind NAD(+). Substrate is bound at residue 124–127 (NPVD). 152-155 (DTSR) contributes to the substrate binding site. His179 (proton acceptor) is an active-site residue. Tyr225 carries the post-translational modification Phosphotyrosine. Residue Thr234 participates in substrate binding.

Belongs to the LDH/MDH superfamily. LDH family. Homotetramer.

The protein localises to the cytoplasm. It carries out the reaction (S)-lactate + NAD(+) = pyruvate + NADH + H(+). It participates in fermentation; pyruvate fermentation to lactate; (S)-lactate from pyruvate: step 1/1. Its function is as follows. Catalyzes the conversion of lactate to pyruvate. This Clostridium botulinum (strain 657 / Type Ba4) protein is L-lactate dehydrogenase.